Consider the following 63-residue polypeptide: KKDGYPVDSGNCKYECLKDDYCNDLCLERKADKGYCYWGKVSCYCYGLPDNSPTKTSGKCNPA.

Positions 2–61 (KDGYPVDSGNCKYECLKDDYCNDLCLERKADKGYCYWGKVSCYCYGLPDNSPTKTSGKCN) constitute an LCN-type CS-alpha/beta domain. Intrachain disulfides connect Cys-12–Cys-60, Cys-16–Cys-36, Cys-22–Cys-43, and Cys-26–Cys-45.

Belongs to the long (4 C-C) scorpion toxin superfamily. Sodium channel inhibitor family. Alpha subfamily. As to expression, expressed by the venom gland.

Its subcellular location is the secreted. Alpha toxins bind voltage-independently at site-3 of sodium channels (Nav) and inhibit the inactivation of the activated channels, thereby blocking neuronal transmission. This chain is Alpha-toxin CsE5, found in Centruroides sculpturatus (Arizona bark scorpion).